We begin with the raw amino-acid sequence, 75 residues long: Large ribosomal subunit protein uL29 (75 aa).

It belongs to the universal ribosomal protein uL29 family.

This chain is Large ribosomal subunit protein uL29, found in Nostoc punctiforme (strain ATCC 29133 / PCC 73102).